Consider the following 330-residue polypeptide: Phenylalanine--tRNA ligase alpha subunit (330 aa).

Glu255 lines the Mg(2+) pocket.

Belongs to the class-II aminoacyl-tRNA synthetase family. Phe-tRNA synthetase alpha subunit type 1 subfamily. In terms of assembly, tetramer of two alpha and two beta subunits. The cofactor is Mg(2+).

Its subcellular location is the cytoplasm. The catalysed reaction is tRNA(Phe) + L-phenylalanine + ATP = L-phenylalanyl-tRNA(Phe) + AMP + diphosphate + H(+). In Acinetobacter baylyi (strain ATCC 33305 / BD413 / ADP1), this protein is Phenylalanine--tRNA ligase alpha subunit.